The primary structure comprises 207 residues: Thiamine-phosphate synthase (207 aa).

Residues 35–39 (QYRDK) and Asn-67 contribute to the 4-amino-2-methyl-5-(diphosphooxymethyl)pyrimidine site. Positions 68 and 86 each coordinate Mg(2+). Position 105 (Thr-105) interacts with 4-amino-2-methyl-5-(diphosphooxymethyl)pyrimidine. 132–134 (SNT) is a binding site for 2-[(2R,5Z)-2-carboxy-4-methylthiazol-5(2H)-ylidene]ethyl phosphate. Lys-135 is a 4-amino-2-methyl-5-(diphosphooxymethyl)pyrimidine binding site. 2-[(2R,5Z)-2-carboxy-4-methylthiazol-5(2H)-ylidene]ethyl phosphate is bound at residue Gly-162.

It belongs to the thiamine-phosphate synthase family. Mg(2+) serves as cofactor.

It catalyses the reaction 2-[(2R,5Z)-2-carboxy-4-methylthiazol-5(2H)-ylidene]ethyl phosphate + 4-amino-2-methyl-5-(diphosphooxymethyl)pyrimidine + 2 H(+) = thiamine phosphate + CO2 + diphosphate. It carries out the reaction 2-(2-carboxy-4-methylthiazol-5-yl)ethyl phosphate + 4-amino-2-methyl-5-(diphosphooxymethyl)pyrimidine + 2 H(+) = thiamine phosphate + CO2 + diphosphate. The enzyme catalyses 4-methyl-5-(2-phosphooxyethyl)-thiazole + 4-amino-2-methyl-5-(diphosphooxymethyl)pyrimidine + H(+) = thiamine phosphate + diphosphate. It participates in cofactor biosynthesis; thiamine diphosphate biosynthesis; thiamine phosphate from 4-amino-2-methyl-5-diphosphomethylpyrimidine and 4-methyl-5-(2-phosphoethyl)-thiazole: step 1/1. Condenses 4-methyl-5-(beta-hydroxyethyl)thiazole monophosphate (THZ-P) and 2-methyl-4-amino-5-hydroxymethyl pyrimidine pyrophosphate (HMP-PP) to form thiamine monophosphate (TMP). The protein is Thiamine-phosphate synthase of Pseudomonas fluorescens (strain Pf0-1).